The sequence spans 479 residues: Mannose-1-phosphate guanylyltransferase RfbM (479 aa).

It belongs to the mannose-6-phosphate isomerase type 2 family. In terms of assembly, homodimer.

The catalysed reaction is alpha-D-mannose 1-phosphate + GTP + H(+) = GDP-alpha-D-mannose + diphosphate. Its pathway is nucleotide-sugar biosynthesis; GDP-alpha-D-mannose biosynthesis; GDP-alpha-D-mannose from alpha-D-mannose 1-phosphate (GTP route): step 1/1. It participates in bacterial outer membrane biogenesis; LPS O-antigen biosynthesis. Functionally, involved in GDP-mannose biosynthesis which serves as the activated sugar nucleotide precursor for mannose residues in cell surface polysaccharides. This enzyme participates in synthesis of the LPS group B O antigen. The chain is Mannose-1-phosphate guanylyltransferase RfbM (rfbM) from Salmonella typhimurium (strain LT2 / SGSC1412 / ATCC 700720).